A 68-amino-acid polypeptide reads, in one-letter code: Large ribosomal subunit protein bL35 (68 aa).

The protein belongs to the bacterial ribosomal protein bL35 family.

In Rickettsia felis (strain ATCC VR-1525 / URRWXCal2) (Rickettsia azadi), this protein is Large ribosomal subunit protein bL35.